The sequence spans 327 residues: Metapyrocatechase (327 aa).

VOC domains follow at residues Gln14–Glu126 and Arg156–Asp276. 3 residues coordinate Fe cation: His159, His221, and Glu272.

The protein belongs to the extradiol ring-cleavage dioxygenase family. Requires Fe(2+) as cofactor.

It carries out the reaction catechol + O2 = (2Z,4E)-2-hydroxy-6-oxohexa-2,4-dienoate + H(+). The chain is Metapyrocatechase (pheB) from Geobacillus stearothermophilus (Bacillus stearothermophilus).